The sequence spans 50 residues: Insulin-1 (50 aa).

Intrachain disulfides connect Cys-7–Cys-36, Cys-19–Cys-49, and Cys-35–Cys-40.

Belongs to the insulin family. In terms of assembly, heterodimer of a B chain and an A chain linked by two disulfide bonds.

The protein localises to the secreted. Its function is as follows. Insulin decreases blood glucose concentration. It increases cell permeability to monosaccharides, amino acids and fatty acids. It accelerates glycolysis, the pentose phosphate cycle, and glycogen synthesis in liver. The polypeptide is Insulin-1 (Katsuwonus pelamis (Skipjack tuna)).